The sequence spans 337 residues: uncharacterized protein (337 aa).

This sequence belongs to the NAD(P)-dependent epimerase/dehydratase family.

This is an uncharacterized protein from Escherichia coli (strain K12).